Reading from the N-terminus, the 480-residue chain is tRNA-2-methylthio-N(6)-dimethylallyladenosine synthase (480 aa).

Positions K3 to H120 constitute an MTTase N-terminal domain. Residues C12, C49, C83, C157, C161, and C164 each coordinate [4Fe-4S] cluster. The Radical SAM core domain occupies K143–R375. The region spanning R378–R441 is the TRAM domain.

This sequence belongs to the methylthiotransferase family. MiaB subfamily. As to quaternary structure, monomer. Requires [4Fe-4S] cluster as cofactor.

The protein localises to the cytoplasm. The catalysed reaction is N(6)-dimethylallyladenosine(37) in tRNA + (sulfur carrier)-SH + AH2 + 2 S-adenosyl-L-methionine = 2-methylsulfanyl-N(6)-dimethylallyladenosine(37) in tRNA + (sulfur carrier)-H + 5'-deoxyadenosine + L-methionine + A + S-adenosyl-L-homocysteine + 2 H(+). Catalyzes the methylthiolation of N6-(dimethylallyl)adenosine (i(6)A), leading to the formation of 2-methylthio-N6-(dimethylallyl)adenosine (ms(2)i(6)A) at position 37 in tRNAs that read codons beginning with uridine. This is tRNA-2-methylthio-N(6)-dimethylallyladenosine synthase from Colwellia psychrerythraea (strain 34H / ATCC BAA-681) (Vibrio psychroerythus).